The primary structure comprises 417 residues: Tryptophan synthase beta chain (417 aa).

Position 111 is an N6-(pyridoxal phosphate)lysine (Lys111).

This sequence belongs to the TrpB family. Tetramer of two alpha and two beta chains. Pyridoxal 5'-phosphate serves as cofactor.

The catalysed reaction is (1S,2R)-1-C-(indol-3-yl)glycerol 3-phosphate + L-serine = D-glyceraldehyde 3-phosphate + L-tryptophan + H2O. It participates in amino-acid biosynthesis; L-tryptophan biosynthesis; L-tryptophan from chorismate: step 5/5. Its function is as follows. The beta subunit is responsible for the synthesis of L-tryptophan from indole and L-serine. This Fervidobacterium nodosum (strain ATCC 35602 / DSM 5306 / Rt17-B1) protein is Tryptophan synthase beta chain.